Reading from the N-terminus, the 72-residue chain is ATP synthase subunit c (72 aa).

A run of 2 helical transmembrane segments spans residues 1–21 (MSLGVIAAAIAIGLSALGAGI) and 49–69 (FIGVALVEALPIIGVVIAFIV).

Belongs to the ATPase C chain family. In terms of assembly, F-type ATPases have 2 components, F(1) - the catalytic core - and F(0) - the membrane proton channel. F(1) has five subunits: alpha(3), beta(3), gamma(1), delta(1), epsilon(1). F(0) has three main subunits: a(1), b(2) and c(10-14). The alpha and beta chains form an alternating ring which encloses part of the gamma chain. F(1) is attached to F(0) by a central stalk formed by the gamma and epsilon chains, while a peripheral stalk is formed by the delta and b chains.

The protein localises to the cell membrane. In terms of biological role, f(1)F(0) ATP synthase produces ATP from ADP in the presence of a proton or sodium gradient. F-type ATPases consist of two structural domains, F(1) containing the extramembraneous catalytic core and F(0) containing the membrane proton channel, linked together by a central stalk and a peripheral stalk. During catalysis, ATP synthesis in the catalytic domain of F(1) is coupled via a rotary mechanism of the central stalk subunits to proton translocation. Its function is as follows. Key component of the F(0) channel; it plays a direct role in translocation across the membrane. A homomeric c-ring of between 10-14 subunits forms the central stalk rotor element with the F(1) delta and epsilon subunits. The polypeptide is ATP synthase subunit c (Bacillus anthracis (strain A0248)).